The sequence spans 99 residues: Putative membrane protein insertion efficiency factor (99 aa).

Belongs to the UPF0161 family.

Its subcellular location is the cell membrane. Functionally, could be involved in insertion of integral membrane proteins into the membrane. The chain is Putative membrane protein insertion efficiency factor from Corynebacterium efficiens (strain DSM 44549 / YS-314 / AJ 12310 / JCM 11189 / NBRC 100395).